The chain runs to 423 residues: Serine--tRNA ligase (423 aa).

229 to 231 (TAE) provides a ligand contact to L-serine. 258–260 (RRE) is an ATP binding site. An L-serine-binding site is contributed by Glu-281. 345 to 348 (EISS) lines the ATP pocket. An L-serine-binding site is contributed by Ser-379.

It belongs to the class-II aminoacyl-tRNA synthetase family. Type-1 seryl-tRNA synthetase subfamily. In terms of assembly, homodimer. The tRNA molecule binds across the dimer.

Its subcellular location is the cytoplasm. It carries out the reaction tRNA(Ser) + L-serine + ATP = L-seryl-tRNA(Ser) + AMP + diphosphate + H(+). The enzyme catalyses tRNA(Sec) + L-serine + ATP = L-seryl-tRNA(Sec) + AMP + diphosphate + H(+). It functions in the pathway aminoacyl-tRNA biosynthesis; selenocysteinyl-tRNA(Sec) biosynthesis; L-seryl-tRNA(Sec) from L-serine and tRNA(Sec): step 1/1. Functionally, catalyzes the attachment of serine to tRNA(Ser). Is also able to aminoacylate tRNA(Sec) with serine, to form the misacylated tRNA L-seryl-tRNA(Sec), which will be further converted into selenocysteinyl-tRNA(Sec). The chain is Serine--tRNA ligase (serS1) from Methanosarcina barkeri (strain Fusaro / DSM 804).